A 309-amino-acid chain; its full sequence is Malate dehydrogenase (309 aa).

NAD(+) contacts are provided by residues glycine 6–glycine 11 and aspartate 31. Positions 80 and 86 each coordinate substrate. NAD(+) is bound by residues asparagine 93 and threonine 116–asparagine 118. 2 residues coordinate substrate: asparagine 118 and arginine 149. Histidine 173 (proton acceptor) is an active-site residue.

Belongs to the LDH/MDH superfamily. In terms of assembly, homotetramer.

The enzyme catalyses (S)-malate + NAD(+) = oxaloacetate + NADH + H(+). Catalyzes the reversible oxidation of malate to oxaloacetate. Exhibits higher specific activity for oxaloacetate reduction than for malate oxidation in vitro. Has a strong preference for NAD. Can use NADPH for oxaloacetate reduction, but activity decreases more than 90%. No activity detected with NADP(+) and malate. The chain is Malate dehydrogenase from Pyrobaculum islandicum (strain DSM 4184 / JCM 9189 / GEO3).